We begin with the raw amino-acid sequence, 156 residues long: Small ribosomal subunit protein uS7c (156 aa).

The protein belongs to the universal ribosomal protein uS7 family. In terms of assembly, part of the 30S ribosomal subunit.

It is found in the plastid. It localises to the chloroplast. Functionally, one of the primary rRNA binding proteins, it binds directly to 16S rRNA where it nucleates assembly of the head domain of the 30S subunit. In Rhodomonas salina (Cryptomonas salina), this protein is Small ribosomal subunit protein uS7c (rps7).